Consider the following 410-residue polypeptide: Class E basic helix-loop-helix protein 41 (410 aa).

Lys-31 is covalently cross-linked (Glycyl lysine isopeptide (Lys-Gly) (interchain with G-Cter in SUMO2)). Positions 44 to 99 (TYKLPHRLIEKKRRDRINECIAQLKDLLPEHLKLTTLGHLEKAVVLELTLKHLKAL) constitute a bHLH domain. Lys-121 is covalently cross-linked (Glycyl lysine isopeptide (Lys-Gly) (interchain with G-Cter in SUMO2)). One can recognise an Orange domain in the interval 131–166 (FHSGFQTCAKEVLQYLARFESWTPREPRCAQLVSHL). Disordered stretches follow at residues 209–251 (IQRT…SAAP) and 371–410 (EVAP…KDAP). Lys-240 participates in a covalent cross-link: Glycyl lysine isopeptide (Lys-Gly) (interchain with G-Cter in SUMO2).

As to quaternary structure, homodimer. Heterodimer with BHLHE40/DEC1. Interacts with CIART. Interacts with BMAL1 and RXRA. Interacts with NR0B2 and HNF1A. Highly expressed in the caudate putamen, pineal gland, granular cell layer of the cerebellum, olfactory bulb, piriform cortex, hippocampus and hypothalamic nuclei. Moderately expressed in skeletal muscle, heart. Weakly expressed in lung.

Its subcellular location is the nucleus. Functionally, transcriptional repressor involved in the regulation of the circadian rhythm by negatively regulating the activity of the clock genes and clock-controlled genes. Acts as the negative limb of a novel autoregulatory feedback loop (DEC loop) which differs from the one formed by the PER and CRY transcriptional repressors (PER/CRY loop). Both these loops are interlocked as it represses the expression of PER1 and in turn is repressed by PER1/2 and CRY1/2. Represses the activity of the circadian transcriptional activator: CLOCK-BMAL1 heterodimer by competing for the binding to E-box elements (5'-CACGTG-3') found within the promoters of its target genes. Negatively regulates its own expression and the expression of DBP and BHLHE41/DEC2. Acts as a corepressor of RXR and the RXR-LXR heterodimers and represses the ligand-induced RXRA/B/G, NR1H3/LXRA, NR1H4 and VDR transactivation activity. Inhibits HNF1A-mediated transactivation of CYP1A2, CYP2E1 and CYP3A11. The protein is Class E basic helix-loop-helix protein 41 (Bhlhb3) of Rattus norvegicus (Rat).